Consider the following 301-residue polypeptide: 33 kDa chaperonin (301 aa).

2 disulfide bridges follow: C240–C242 and C273–C276.

It belongs to the HSP33 family. Under oxidizing conditions two disulfide bonds are formed involving the reactive cysteines. Under reducing conditions zinc is bound to the reactive cysteines and the protein is inactive.

The protein resides in the cytoplasm. Its function is as follows. Redox regulated molecular chaperone. Protects both thermally unfolding and oxidatively damaged proteins from irreversible aggregation. Plays an important role in the bacterial defense system toward oxidative stress. The protein is 33 kDa chaperonin of Rippkaea orientalis (strain PCC 8801 / RF-1) (Cyanothece sp. (strain PCC 8801)).